Here is a 649-residue protein sequence, read N- to C-terminus: Phospholipase A1 PLIP1, chloroplastic (649 aa).

A chloroplast-targeting transit peptide spans 1-67; it reads MAFNTAMAST…NNRILAVSVR (67 aa). Residues 420 to 424 carry the GXSXG motif; it reads GHSLG. Residue serine 422 is the Acyl-ester intermediate of the active site. Residues aspartate 483 and histidine 593 each act as charge relay system in the active site.

The protein belongs to the AB hydrolase superfamily. Lipase family.

It localises to the plastid. The protein resides in the chloroplast thylakoid membrane. The catalysed reaction is a 1,2-diacyl-sn-glycero-3-phosphocholine + H2O = a 2-acyl-sn-glycero-3-phosphocholine + a fatty acid + H(+). It catalyses the reaction a 1,2-diacyl-3-O-(beta-D-galactosyl)-sn-glycerol + 2 H2O = 3-beta-D-galactosyl-sn-glycerol + 2 a fatty acid + 2 H(+). In terms of biological role, sn-1-specific phospholipase A1 involved in seed oil biosynthesis. Hydrolyzes polyunsaturated acyl groups from a unique chloroplast-specific phosphatidylglycerol (PG) that contains 16:1 delta 3-trans as its second acyl group. The polyunsaturated acyl groups released by PLIP1 are exported from the chloroplast, reincorporated into phosphatidylcholine (PC), and ultimately enter seed triacylglycerol (TAG). In vitro, possesses broad substrate specificity. Can hydrolyze the galactolipid monogalactosyldiacylglycerol (MGDG), and the phoshpolipids phosphatidylcholine (PC), phosphatidylethanolamine (PE), phosphatidic acid (PA), phosphatidylserine (PS) phosphatidylglycerol (PG) and phosphatidylinositol (PI). This is Phospholipase A1 PLIP1, chloroplastic from Arabidopsis thaliana (Mouse-ear cress).